The sequence spans 471 residues: O-acetyltransferase astG (471 aa).

The protein belongs to the fumigaclavine B O-acetyltransferase family. Monomer.

It carries out the reaction dideacetyl astellolide A + acetyl-CoA = 14-deacetyl astellolide A + CoA. The catalysed reaction is dideacetyl astellolide B + acetyl-CoA = 14-deacetyl astellolide B + CoA. It functions in the pathway secondary metabolite biosynthesis; terpenoid biosynthesis. Functionally, O-acetyltransferase; part of the gene cluster that mediates the biosynthesis of astellolides, drimane-type sesquiterpene esters that show antimicrobial, anti-inflammatory, and anti-tumor activities. The first step in astellolide biosynthesis is performed by the sesquiterpene cyclase astC that catalyzes the formation of drimanyl pyrophosphate from farnesyl pyrophosphate. Drimanyl pyrophosphate is then dephosphorylated by the sesquiterpene phosphatase astI to produce drimanyl monophosphate which is further dephosphorylated to drim-8-ene-11-ol by atsK. Drim-8-ene-11-ol is converted to confertifolin, probably by the cytochrome P450 monooxygenase astD and/or the dehydrogenase astE. The cytochrome P450 monooxygenases astB, astF and astJ then hydroxylate confertifolin at C6, C14, or C15 to form trihydroxy confertifolin. The nonribosomal peptide synthetase astA catalyzes ester bond formation between trihydroxy contifolin and benzoic acid (BA) or 4-hydroxy benzoic acid (4HBA), leading to the formation of dideacetyl astellolides A and B, respectively. Finally, the O-acetyltransferase astG converts dideacetyl astellolides A and B into deacetyl astellolides A and B. This is O-acetyltransferase astG from Aspergillus oryzae (strain ATCC 42149 / RIB 40) (Yellow koji mold).